Reading from the N-terminus, the 488-residue chain is UDP-N-acetylmuramate--L-alanine ligase (488 aa).

127–133 (GTHGKTT) lines the ATP pocket.

The protein belongs to the MurCDEF family.

The protein localises to the cytoplasm. The catalysed reaction is UDP-N-acetyl-alpha-D-muramate + L-alanine + ATP = UDP-N-acetyl-alpha-D-muramoyl-L-alanine + ADP + phosphate + H(+). It functions in the pathway cell wall biogenesis; peptidoglycan biosynthesis. Its function is as follows. Cell wall formation. The protein is UDP-N-acetylmuramate--L-alanine ligase of Shewanella sp. (strain MR-4).